A 184-amino-acid polypeptide reads, in one-letter code: ATP synthase subunit b, chloroplastic (184 aa).

The helical transmembrane segment at 27–49 threads the bilayer; that stretch reads LATNPINLSVVLGVLIFFGKGVL.

This sequence belongs to the ATPase B chain family. F-type ATPases have 2 components, F(1) - the catalytic core - and F(0) - the membrane proton channel. F(1) has five subunits: alpha(3), beta(3), gamma(1), delta(1), epsilon(1). F(0) has four main subunits: a(1), b(1), b'(1) and c(10-14). The alpha and beta chains form an alternating ring which encloses part of the gamma chain. F(1) is attached to F(0) by a central stalk formed by the gamma and epsilon chains, while a peripheral stalk is formed by the delta, b and b' chains.

The protein resides in the plastid. It localises to the chloroplast thylakoid membrane. F(1)F(0) ATP synthase produces ATP from ADP in the presence of a proton or sodium gradient. F-type ATPases consist of two structural domains, F(1) containing the extramembraneous catalytic core and F(0) containing the membrane proton channel, linked together by a central stalk and a peripheral stalk. During catalysis, ATP synthesis in the catalytic domain of F(1) is coupled via a rotary mechanism of the central stalk subunits to proton translocation. Functionally, component of the F(0) channel, it forms part of the peripheral stalk, linking F(1) to F(0). This chain is ATP synthase subunit b, chloroplastic, found in Populus alba (White poplar).